The following is a 275-amino-acid chain: Hydroxyethylthiazole kinase (275 aa).

Met50 is a binding site for substrate. ATP is bound by residues Arg126 and Ser171. Ala200 lines the substrate pocket.

This sequence belongs to the Thz kinase family. Mg(2+) serves as cofactor.

It carries out the reaction 5-(2-hydroxyethyl)-4-methylthiazole + ATP = 4-methyl-5-(2-phosphooxyethyl)-thiazole + ADP + H(+). The protein operates within cofactor biosynthesis; thiamine diphosphate biosynthesis; 4-methyl-5-(2-phosphoethyl)-thiazole from 5-(2-hydroxyethyl)-4-methylthiazole: step 1/1. Functionally, catalyzes the phosphorylation of the hydroxyl group of 4-methyl-5-beta-hydroxyethylthiazole (THZ). The chain is Hydroxyethylthiazole kinase from Acinetobacter baumannii (strain SDF).